The sequence spans 505 residues: Lysine--tRNA ligase, heat inducible (505 aa).

Residues lysine 114 and lysine 156 each carry the N6-acetyllysine modification. Residues glutamate 415 and glutamate 422 each contribute to the Mg(2+) site.

The protein belongs to the class-II aminoacyl-tRNA synthetase family. In terms of assembly, homodimer. Mg(2+) serves as cofactor.

The protein localises to the cytoplasm. The enzyme catalyses tRNA(Lys) + L-lysine + ATP = L-lysyl-tRNA(Lys) + AMP + diphosphate. This Escherichia coli O6:H1 (strain CFT073 / ATCC 700928 / UPEC) protein is Lysine--tRNA ligase, heat inducible (lysU).